The primary structure comprises 1409 residues: DNA-directed RNA polymerase subunit beta' (1409 aa).

Zn(2+) contacts are provided by C69, C71, C84, and C87. Mg(2+) contacts are provided by D461, D463, and D465. Zn(2+) contacts are provided by C805, C879, C886, and C889.

It belongs to the RNA polymerase beta' chain family. In terms of assembly, the RNAP catalytic core consists of 2 alpha, 1 beta, 1 beta' and 1 omega subunit. When a sigma factor is associated with the core the holoenzyme is formed, which can initiate transcription. Mg(2+) serves as cofactor. Zn(2+) is required as a cofactor.

The catalysed reaction is RNA(n) + a ribonucleoside 5'-triphosphate = RNA(n+1) + diphosphate. Functionally, DNA-dependent RNA polymerase catalyzes the transcription of DNA into RNA using the four ribonucleoside triphosphates as substrates. This Anaplasma phagocytophilum (strain HZ) protein is DNA-directed RNA polymerase subunit beta'.